Consider the following 121-residue polypeptide: Putative membrane protein insertion efficiency factor (121 aa).

The protein belongs to the UPF0161 family.

The protein localises to the cell inner membrane. Functionally, could be involved in insertion of integral membrane proteins into the membrane. The polypeptide is Putative membrane protein insertion efficiency factor (Rhodopseudomonas palustris (strain HaA2)).